The chain runs to 455 residues: O-acyltransferase pigD (455 aa).

It belongs to the trichothecene 3-O-acetyltransferase family.

It functions in the pathway secondary metabolite biosynthesis. In terms of biological role, O-acetyltransferase; part of the gene cluster that mediates the biosynthesis of azaphilone pigments (MonAzPs), a complex mixture of compounds with a common azaphilone skeleton very widely used as food colorants. Within the pathway, pigD directly transfers the fatty acyl chain from the beta-ketoacyl-ACP produced by the pigJ-pigK fatty acid synthase (FAS) to the C-4 alcohol. The first step of the pathway is performed by the nrPKS pigA that forms the hexaketide precursor from successive condensations of five malonyl-CoA units, with a simple acetyl-CoA starter unit. The role of esterase pigG is not clear, but it may play at most a supplementary role in the formation of the benzaldehyde produced by the pigA nrPKS. This very reactive benzaldehyde is intercepted by the pigC ketoreductase that to provide the first stable enzyme-free MonAzPs intermediate, 6-(4-hydroxy-2-oxopentyl)-3-methyl-2,4-dioxocyclohexane carbaldehyde, also known as M7PKS-1. The FAD-dependent monooxygenase pigN hydroxylates M7PKS-1 at C-4, which triggers the formation of the pyran ring. PigJ, pigK and pigD are involved in the acetylation of the pyran ring. PigJ and pigK form the two subunits of a dedicated fungal FAS that produces the side chain fatty acyl moiety of MonAzPs and pigD transfers the fatty acyl chain to the C-4 alcohol. PigM and pigO are involved in the elimination of the omega-1 alcohol. PigM acts as an O-acetyltransferase that synthesizes the putative O-11 acetyl intermediate whereas pigO eliminates acetic acid to yield an intermediate with a C10(11) double bond. The dehydration of the C-11 alcohol followed by the reduction of the C6(7) double bond by the NAD(P)H-dependent oxidoreductase pigE increases the electrophilicity of the C-5 ketone of the resulting acyl benzopyran. This in turn sets up the C-5 ketone for an intramolecular Knoevenagel aldol condensation with the C-20 enol of the side chain. This condensation affords the characteristic linear tricyclic carbon skeletons of the yellow pigments that serve as the common precursors for the classical yellow pigments monascin and ankaflavin, orange pigments rubopunctatin and monascorubrin, and red pigments ribropunctamine and monascorubramine. The FAD-dependent oxidoreductase pigF is especially invoved in the biosynthesis of orange and red pigments via desaturation of C6(7). The sequence is that of O-acyltransferase pigD from Monascus ruber (Mold).